The primary structure comprises 393 residues: Meiotic driver wtf19 (393 aa).

The disordered stretch occupies residues 1–98 (MKNKYYPLRS…SSGTADNSST (98 aa)). The span at 11–29 (SMDELSAKNDNEIDLEKGP) shows a compositional bias: basic and acidic residues. Composition is skewed to polar residues over residues 57-72 (GANN…STTP) and 89-98 (SSGTADNSST). The next 8 helical transmembrane spans lie at 104-124 (AFLS…YLTY), 137-157 (WVYF…LWYF), 167-187 (VTVI…AQCV), 208-228 (CVKV…IGLF), 233-253 (EMMI…FGCV), 269-289 (CTIS…FWTF), 296-316 (LAKV…TMFL), and 332-352 (VLFI…GALI).

It belongs to the WTF family. As to quaternary structure, homomer. Forms protein aggregates. The two isoforms can interact with each other and with themselves. High sequence similarity is required for their interaction.

The protein resides in the spore membrane. It is found in the vacuole membrane. The protein localises to the ascus epiplasm. It localises to the cytoplasm. Its subcellular location is the endoplasmic reticulum membrane. Functionally, promotes unequal transmission of alleles from the parental zygote to progeny spores by acting as poison/antidote system where the poison and antidote proteins are produced from the same locus; the poison component is trans-acting and targets all spores within an ascus whereas the antidote component is spore-specific, leading to poisoning of all progeny that do not inherit the allele. Localizes isoform 2 to the vacuole thereby facilitating its degradation. Its function is as follows. Forms toxic aggregates that disrupt spore maturation. The polypeptide is Meiotic driver wtf19 (Schizosaccharomyces pombe (strain 972 / ATCC 24843) (Fission yeast)).